The following is a 545-amino-acid chain: CTP synthase (545 aa).

An amidoligase domain region spans residues 1-265; it reads MTKYIFITGG…DEIVVKKLSL (265 aa). Ser13 lines the CTP pocket. Residue Ser13 participates in UTP binding. Residues 14–19 and Asp71 each bind ATP; that span reads SLGKGI. Positions 71 and 139 each coordinate Mg(2+). CTP contacts are provided by residues 146 to 148, 186 to 191, and Lys222; these read DIE and KTKPTQ. UTP is bound by residues 186–191 and Lys222; that span reads KTKPTQ. The region spanning 290 to 541 is the Glutamine amidotransferase type-1 domain; sequence KIAMVGKYTE…VFAARIHHQE (252 aa). Gly351 contacts L-glutamine. The active-site Nucleophile; for glutamine hydrolysis is the Cys378. L-glutamine is bound by residues 379–382, Glu402, and Arg469; that span reads LGMQ. Residues His514 and Glu516 contribute to the active site.

The protein belongs to the CTP synthase family. As to quaternary structure, homotetramer.

The catalysed reaction is UTP + L-glutamine + ATP + H2O = CTP + L-glutamate + ADP + phosphate + 2 H(+). It catalyses the reaction L-glutamine + H2O = L-glutamate + NH4(+). The enzyme catalyses UTP + NH4(+) + ATP = CTP + ADP + phosphate + 2 H(+). The protein operates within pyrimidine metabolism; CTP biosynthesis via de novo pathway; CTP from UDP: step 2/2. Allosterically activated by GTP, when glutamine is the substrate; GTP has no effect on the reaction when ammonia is the substrate. The allosteric effector GTP functions by stabilizing the protein conformation that binds the tetrahedral intermediate(s) formed during glutamine hydrolysis. Inhibited by the product CTP, via allosteric rather than competitive inhibition. Functionally, catalyzes the ATP-dependent amination of UTP to CTP with either L-glutamine or ammonia as the source of nitrogen. Regulates intracellular CTP levels through interactions with the four ribonucleotide triphosphates. The sequence is that of CTP synthase from Legionella pneumophila (strain Lens).